The sequence spans 246 residues: Adenylate kinase 4 (246 aa).

N-acetylalanine is present on Ala-2. Residue 43–48 (GSGKGT) participates in ATP binding. The interval 63-92 (STGDMLRAAVASKTPLGVKAKEAMEKGELV) is NMP. AMP is bound by residues Thr-64, Arg-69, 90-92 (ELV), 118-121 (GFPR), and Gln-125. Positions 159-196 (GRWIHPSSGRSYHTKFAPPKTPGVDDITGEPLIQRKDD) are LID. Arg-160 contacts ATP. Positions 193 and 204 each coordinate AMP.

The protein belongs to the adenylate kinase family. As to quaternary structure, monomer.

The protein localises to the cytoplasm. The enzyme catalyses AMP + ATP = 2 ADP. In terms of biological role, catalyzes the reversible transfer of the terminal phosphate group between ATP and AMP. Plays an important role in cellular energy homeostasis and in adenine nucleotide metabolism. The protein is Adenylate kinase 4 (ADK1) of Arabidopsis thaliana (Mouse-ear cress).